We begin with the raw amino-acid sequence, 143 residues long: Putative transcriptional regulatory protein PH0763 (143 aa).

Belongs to the Tfx family.

Putative transcriptional regulator. The sequence is that of Putative transcriptional regulatory protein PH0763 from Pyrococcus horikoshii (strain ATCC 700860 / DSM 12428 / JCM 9974 / NBRC 100139 / OT-3).